The sequence spans 460 residues: Argininosuccinate lyase (460 aa).

Belongs to the lyase 1 family. Argininosuccinate lyase subfamily.

The protein resides in the cytoplasm. The enzyme catalyses 2-(N(omega)-L-arginino)succinate = fumarate + L-arginine. It functions in the pathway amino-acid biosynthesis; L-arginine biosynthesis; L-arginine from L-ornithine and carbamoyl phosphate: step 3/3. The protein is Argininosuccinate lyase of Oleidesulfovibrio alaskensis (strain ATCC BAA-1058 / DSM 17464 / G20) (Desulfovibrio alaskensis).